Here is a 764-residue protein sequence, read N- to C-terminus: 1,4-alpha-glucan branching enzyme GlgB (764 aa).

Asp-434 acts as the Nucleophile in catalysis. Catalysis depends on Glu-487, which acts as the Proton donor.

This sequence belongs to the glycosyl hydrolase 13 family. GlgB subfamily. In terms of assembly, monomer.

The catalysed reaction is Transfers a segment of a (1-&gt;4)-alpha-D-glucan chain to a primary hydroxy group in a similar glucan chain.. The protein operates within glycan biosynthesis; glycogen biosynthesis. In terms of biological role, catalyzes the formation of the alpha-1,6-glucosidic linkages in glycogen by scission of a 1,4-alpha-linked oligosaccharide from growing alpha-1,4-glucan chains and the subsequent attachment of the oligosaccharide to the alpha-1,6 position. The protein is 1,4-alpha-glucan branching enzyme GlgB of Nostoc sp. (strain PCC 7120 / SAG 25.82 / UTEX 2576).